Reading from the N-terminus, the 1070-residue chain is 3',5'-cyclic-AMP phosphodiesterase (1070 aa).

Disordered regions lie at residues 1-91 (MSQE…KQDS), 166-215 (STSI…TRFQ), 487-516 (VPAS…LSQG), and 615-653 (SAGQ…RLPT). A compositionally biased stretch (low complexity) spans 51–69 (KQVQVQSQKFSSTSSTTKV). The span at 70-84 (ATHSFSMSSSAGTTG) shows a compositional bias: polar residues. The segment covering 166–210 (STSIITSSEQRTSTSTSSSSSTRYIASGSSNLAGGNSNSASSASS) has biased composition (low complexity). The span at 488–506 (PASNKSRRPNQSSSASRSG) shows a compositional bias: polar residues. One can recognise a PDEase domain in the interval 656–985 (VETPRENELG…DYYQSMIPPS (330 aa)). Histidine 732 functions as the Proton donor in the catalytic mechanism. Position 732–736 (732–736 (HNSLH)) interacts with 3',5'-cyclic AMP. A divalent metal cation-binding residues include histidine 736, histidine 772, aspartate 773, and aspartate 890. 3 residues coordinate 3',5'-cyclic AMP: aspartate 773, aspartate 890, and glutamine 941. The segment covering 1007–1024 (EESDQENLAELEEGDESG) has biased composition (acidic residues). Positions 1007–1070 (EESDQENLAE…CQNQPQHGGM (64 aa)) are disordered. A compositionally biased stretch (low complexity) spans 1025-1042 (GESTTTGTTGTTAASALS). A compositionally biased stretch (gly residues) spans 1043-1054 (GAGGGGGGGGGM). Positions 1060-1070 (GCQNQPQHGGM) are enriched in polar residues.

The protein belongs to the cyclic nucleotide phosphodiesterase family. PDE4 subfamily. In terms of assembly, monomer. Requires a divalent metal cation as cofactor.

It carries out the reaction 3',5'-cyclic AMP + H2O = AMP + H(+). The protein operates within purine metabolism; 3',5'-cyclic AMP degradation; AMP from 3',5'-cyclic AMP: step 1/1. In terms of biological role, hydrolyzes the second messenger cAMP, which is a key regulator of many important physiological processes. Vital for female fertility. Required for learning/memory. The chain is 3',5'-cyclic-AMP phosphodiesterase (dnc) from Drosophila melanogaster (Fruit fly).